Reading from the N-terminus, the 947-residue chain is Bifunctional glutamine synthetase adenylyltransferase/adenylyl-removing enzyme (947 aa).

An adenylyl removase region spans residues 1 to 440 (MTPLSSPLSQ…VFNELIGDDE (440 aa)). Positions 450 to 947 (SEPWREVWQD…ASWRKWLVAV (498 aa)) are adenylyl transferase.

The protein belongs to the GlnE family. It depends on Mg(2+) as a cofactor.

The enzyme catalyses [glutamine synthetase]-O(4)-(5'-adenylyl)-L-tyrosine + phosphate = [glutamine synthetase]-L-tyrosine + ADP. It carries out the reaction [glutamine synthetase]-L-tyrosine + ATP = [glutamine synthetase]-O(4)-(5'-adenylyl)-L-tyrosine + diphosphate. In terms of biological role, involved in the regulation of glutamine synthetase GlnA, a key enzyme in the process to assimilate ammonia. When cellular nitrogen levels are high, the C-terminal adenylyl transferase (AT) inactivates GlnA by covalent transfer of an adenylyl group from ATP to specific tyrosine residue of GlnA, thus reducing its activity. Conversely, when nitrogen levels are low, the N-terminal adenylyl removase (AR) activates GlnA by removing the adenylyl group by phosphorolysis, increasing its activity. The regulatory region of GlnE binds the signal transduction protein PII (GlnB) which indicates the nitrogen status of the cell. The chain is Bifunctional glutamine synthetase adenylyltransferase/adenylyl-removing enzyme from Salmonella heidelberg (strain SL476).